The primary structure comprises 161 residues: Hydrogenase expression/formation protein HoxO (161 aa).

It belongs to the HupG/HyaE family.

In Cupriavidus necator (strain ATCC 17699 / DSM 428 / KCTC 22496 / NCIMB 10442 / H16 / Stanier 337) (Ralstonia eutropha), this protein is Hydrogenase expression/formation protein HoxO (hoxO).